Consider the following 385-residue polypeptide: uncharacterized protein (385 aa).

This sequence belongs to the mycobacterial PPE family.

This is an uncharacterized protein from Mycobacterium tuberculosis (strain CDC 1551 / Oshkosh).